The primary structure comprises 356 residues: Histidinol-phosphate aminotransferase (356 aa).

The residue at position 214 (Lys214) is an N6-(pyridoxal phosphate)lysine.

It belongs to the class-II pyridoxal-phosphate-dependent aminotransferase family. Histidinol-phosphate aminotransferase subfamily. Homodimer. Requires pyridoxal 5'-phosphate as cofactor.

The catalysed reaction is L-histidinol phosphate + 2-oxoglutarate = 3-(imidazol-4-yl)-2-oxopropyl phosphate + L-glutamate. The protein operates within amino-acid biosynthesis; L-histidine biosynthesis; L-histidine from 5-phospho-alpha-D-ribose 1-diphosphate: step 7/9. The sequence is that of Histidinol-phosphate aminotransferase from Escherichia coli O7:K1 (strain IAI39 / ExPEC).